The primary structure comprises 820 residues: Serine/threonine-protein phosphatase 4 regulatory subunit 3-A (820 aa).

The 100-residue stretch at 1 to 100 (MSDTRRRVKV…DEIWEKICQV (100 aa)) folds into the WH1 domain. The segment covering 682-694 (ELWFNEDDEEEGE) has biased composition (acidic residues). Disordered stretches follow at residues 682-712 (ELWFNEDDEEEGEAVVPPVEKTKPEDDFPEG) and 750-820 (AANG…RLGS). The span at 701-712 (EKTKPEDDFPEG) shows a compositional bias: basic and acidic residues. Composition is skewed to polar residues over residues 750 to 761 (AANGANSTNSKS) and 768 to 790 (PATSNGSSSKNTSLTTTVASTKG). Residues 798–809 (YPDDEDEEEEED) show a composition bias toward acidic residues.

It belongs to the SMEK family. As to quaternary structure, serine/threonine-protein phosphatase 4 (PP4) occurs in different assemblies of the catalytic and one or more regulatory subunits.

Its function is as follows. Regulatory subunit of serine/threonine-protein phosphatase 4 (PP4). In Xenopus laevis (African clawed frog), this protein is Serine/threonine-protein phosphatase 4 regulatory subunit 3-A.